The primary structure comprises 406 residues: Acetate kinase (406 aa).

Residue Asn-7 participates in Mg(2+) binding. ATP is bound at residue Lys-14. Arg-90 provides a ligand contact to substrate. The active-site Proton donor/acceptor is Asp-147. ATP contacts are provided by residues His-207–Gly-211, Asp-283–Arg-285, and Gly-331–Asn-335. A Mg(2+)-binding site is contributed by Glu-385.

The protein belongs to the acetokinase family. As to quaternary structure, homodimer. Mg(2+) is required as a cofactor. Mn(2+) serves as cofactor.

Its subcellular location is the cytoplasm. It carries out the reaction acetate + ATP = acetyl phosphate + ADP. The protein operates within metabolic intermediate biosynthesis; acetyl-CoA biosynthesis; acetyl-CoA from acetate: step 1/2. Functionally, catalyzes the formation of acetyl phosphate from acetate and ATP. Can also catalyze the reverse reaction. In Thermosipho melanesiensis (strain DSM 12029 / CIP 104789 / BI429), this protein is Acetate kinase.